We begin with the raw amino-acid sequence, 164 residues long: uncharacterized protein (164 aa).

This is an uncharacterized protein from Acanthamoeba polyphaga (Amoeba).